Reading from the N-terminus, the 346-residue chain is Heparan sulfate glucosamine 3-O-sulfotransferase 5 (346 aa).

The Cytoplasmic portion of the chain corresponds to 1–12 (MLFKQQAWLRQK). A helical; Signal-anchor for type II membrane protein membrane pass occupies residues 13-32 (LLVLGSLAVGSLLYLVARVG). The Lumenal segment spans residues 33 to 346 (SLDRLQPICP…QITGRTLNWP (314 aa)). 100 to 104 (KGGTR) contacts 3'-phosphoadenylyl sulfate. Residues 122 to 128 (EIHFFDN) and 155 to 158 (KSPA) contribute to the substrate site. 3'-phosphoadenylyl sulfate is bound by residues Arg183 and Ser191. 226–227 (YK) serves as a coordination point for substrate. Asn287 is a glycosylation site (N-linked (GlcNAc...) asparagine). 3'-phosphoadenylyl sulfate is bound at residue Tyr293. Cys294 and Cys304 are joined by a disulfide. 309–313 (KGRIH) contacts 3'-phosphoadenylyl sulfate.

It belongs to the sulfotransferase 1 family. As to expression, highly expressed in skeletal muscle and fetal brain, and also found in adult brain, spinal cord, cerebellum and colon.

It localises to the golgi apparatus membrane. The enzyme catalyses alpha-D-glucosaminyl-[heparan sulfate](n) + 3'-phosphoadenylyl sulfate = 3-sulfo-alpha-D-glucosaminyl-[heparan sulfate](n) + adenosine 3',5'-bisphosphate + H(+). In terms of biological role, sulfotransferase that utilizes 3'-phospho-5'-adenylyl sulfate (PAPS) to catalyze the transfer of a sulfo group to position 3 of glucosamine residues in heparan. Catalyzes the rate limiting step in the biosynthesis of heparan sulfate (HSact). This modification is a crucial step in the biosynthesis of anticoagulant heparan sulfate as it completes the structure of the antithrombin pentasaccharide binding site. Also generates GlcUA-GlcNS or IdoUA-GlcNS and IdoUA2S-GlcNH2. The substrate-specific O-sulfation generates an enzyme-modified heparan sulfate which acts as a binding receptor to Herpes simplex virus-1 (HSV-1) and permits its entry. This Homo sapiens (Human) protein is Heparan sulfate glucosamine 3-O-sulfotransferase 5 (HS3ST5).